Here is a 335-residue protein sequence, read N- to C-terminus: Methionine aminopeptidase 1D, mitochondrial (335 aa).

A mitochondrion-targeting transit peptide spans 1–19; the sequence is MAAPIGVPLLVRGGCQRIL. His-161 contributes to the substrate binding site. Asp-178, Asp-189, and His-252 together coordinate a divalent metal cation. His-259 provides a ligand contact to substrate. Positions 284 and 315 each coordinate a divalent metal cation.

The protein belongs to the peptidase M24A family. Methionine aminopeptidase type 1 subfamily. It depends on Co(2+) as a cofactor. Requires Zn(2+) as cofactor. Mn(2+) serves as cofactor. Fe(2+) is required as a cofactor.

It is found in the mitochondrion. It catalyses the reaction Release of N-terminal amino acids, preferentially methionine, from peptides and arylamides.. Its function is as follows. Removes the N-terminal methionine from nascent proteins. The N-terminal methionine is often cleaved when the second residue in the primary sequence is small and uncharged (Met-Ala-, Cys, Gly, Pro, Ser, Thr, or Val). Requires deformylation of the N(alpha)-formylated initiator methionine before it can be hydrolyzed. This chain is Methionine aminopeptidase 1D, mitochondrial (Metap1d), found in Mus musculus (Mouse).